A 1267-amino-acid polypeptide reads, in one-letter code: DNA-directed RNA polymerase subunit beta (1267 aa).

This sequence belongs to the RNA polymerase beta chain family. In terms of assembly, the RNAP catalytic core consists of 2 alpha, 1 beta, 1 beta' and 1 omega subunit. When a sigma factor is associated with the core the holoenzyme is formed, which can initiate transcription.

The catalysed reaction is RNA(n) + a ribonucleoside 5'-triphosphate = RNA(n+1) + diphosphate. Functionally, DNA-dependent RNA polymerase catalyzes the transcription of DNA into RNA using the four ribonucleoside triphosphates as substrates. The protein is DNA-directed RNA polymerase subunit beta (rpoB) of Carsonella ruddii (strain PV).